A 156-amino-acid chain; its full sequence is MPRRREVAKRVILPDPKFNDRVVAKLVSVIMLDGKKSTAERALYGALDIVSQKAGEEPVKVLKKCLDNIKPMLGVKSRRVGGSTYQVPVEVRADRRVSLAMRWLVRYANERSEKTITDKLAGEILDAYNNRGAAVKKREDTHRMAEANRAFAHYRW.

It belongs to the universal ribosomal protein uS7 family. In terms of assembly, part of the 30S ribosomal subunit. Contacts proteins S9 and S11.

Its function is as follows. One of the primary rRNA binding proteins, it binds directly to 16S rRNA where it nucleates assembly of the head domain of the 30S subunit. Is located at the subunit interface close to the decoding center, probably blocks exit of the E-site tRNA. The polypeptide is Small ribosomal subunit protein uS7 (Geobacter sulfurreducens (strain ATCC 51573 / DSM 12127 / PCA)).